Reading from the N-terminus, the 331-residue chain is Putative phosphoribosylaminoimidazole-succinocarboxamide synthase (331 aa).

This sequence belongs to the SAICAR synthetase family. Highly divergent.

It carries out the reaction 5-amino-1-(5-phospho-D-ribosyl)imidazole-4-carboxylate + L-aspartate + ATP = (2S)-2-[5-amino-1-(5-phospho-beta-D-ribosyl)imidazole-4-carboxamido]succinate + ADP + phosphate + 2 H(+). Its pathway is purine metabolism; IMP biosynthesis via de novo pathway; 5-amino-1-(5-phospho-D-ribosyl)imidazole-4-carboxamide from 5-amino-1-(5-phospho-D-ribosyl)imidazole-4-carboxylate: step 1/2. This is Putative phosphoribosylaminoimidazole-succinocarboxamide synthase (purC) from Archaeoglobus fulgidus (strain ATCC 49558 / DSM 4304 / JCM 9628 / NBRC 100126 / VC-16).